The chain runs to 186 residues: ATP synthase subunit delta (186 aa).

Belongs to the ATPase delta chain family. F-type ATPases have 2 components, F(1) - the catalytic core - and F(0) - the membrane proton channel. F(1) has five subunits: alpha(3), beta(3), gamma(1), delta(1), epsilon(1). F(0) has three main subunits: a(1), b(2) and c(10-14). The alpha and beta chains form an alternating ring which encloses part of the gamma chain. F(1) is attached to F(0) by a central stalk formed by the gamma and epsilon chains, while a peripheral stalk is formed by the delta and b chains.

It is found in the cell inner membrane. Functionally, f(1)F(0) ATP synthase produces ATP from ADP in the presence of a proton or sodium gradient. F-type ATPases consist of two structural domains, F(1) containing the extramembraneous catalytic core and F(0) containing the membrane proton channel, linked together by a central stalk and a peripheral stalk. During catalysis, ATP synthesis in the catalytic domain of F(1) is coupled via a rotary mechanism of the central stalk subunits to proton translocation. This protein is part of the stalk that links CF(0) to CF(1). It either transmits conformational changes from CF(0) to CF(1) or is implicated in proton conduction. This Nitrobacter hamburgensis (strain DSM 10229 / NCIMB 13809 / X14) protein is ATP synthase subunit delta.